The chain runs to 286 residues: Shikimate dehydrogenase (NADP(+)) (286 aa).

Shikimate contacts are provided by residues 20 to 22 and Thr-67; that span reads SLS. Catalysis depends on Lys-71, which acts as the Proton acceptor. 2 residues coordinate shikimate: Asn-92 and Asp-107. NADP(+) contacts are provided by residues 132 to 136 and Met-228; that span reads GAGGA. Position 230 (Tyr-230) interacts with shikimate. Position 251 (Gly-251) interacts with NADP(+).

It belongs to the shikimate dehydrogenase family. Homodimer.

It carries out the reaction shikimate + NADP(+) = 3-dehydroshikimate + NADPH + H(+). It functions in the pathway metabolic intermediate biosynthesis; chorismate biosynthesis; chorismate from D-erythrose 4-phosphate and phosphoenolpyruvate: step 4/7. Functionally, involved in the biosynthesis of the chorismate, which leads to the biosynthesis of aromatic amino acids. Catalyzes the reversible NADPH linked reduction of 3-dehydroshikimate (DHSA) to yield shikimate (SA). The chain is Shikimate dehydrogenase (NADP(+)) from Geobacter metallireducens (strain ATCC 53774 / DSM 7210 / GS-15).